Here is a 261-residue protein sequence, read N- to C-terminus: Zinc import ATP-binding protein ZnuC (261 aa).

Residues 5–220 (ISLKALSVTF…PSYIALFGSA (216 aa)) form the ABC transporter domain. Residue 37–44 (GPNGAGKS) participates in ATP binding. Positions 236–261 (HHDLAGQPVSGDATQCNHHHHGHHHD) are disordered. The segment covering 252–261 (NHHHHGHHHD) has biased composition (basic residues).

The protein belongs to the ABC transporter superfamily. Zinc importer (TC 3.A.1.15.5) family. As to quaternary structure, the complex is composed of two ATP-binding proteins (ZnuC), two transmembrane proteins (ZnuB) and a solute-binding protein (ZnuA).

It is found in the cell inner membrane. The enzyme catalyses Zn(2+)(out) + ATP(in) + H2O(in) = Zn(2+)(in) + ADP(in) + phosphate(in) + H(+)(in). In terms of biological role, part of the ABC transporter complex ZnuABC involved in zinc import. Responsible for energy coupling to the transport system. The polypeptide is Zinc import ATP-binding protein ZnuC (Vibrio vulnificus (strain CMCP6)).